The chain runs to 46 residues: Lariatin (46 aa).

Residues 1 to 26 constitute a propeptide that is removed on maturation; that stretch reads MTSQPSKKTYNAPSLVQRGKFARTTA. The segment at residues 27–34 is a cross-link (isoglutamyl glycine isopeptide (Gly-Glu)); the sequence is GSQLVYRE.

The linear precursor LarA is probably cleaved by the putative peptidase LarD, generating linear 18-residue Lariatin-A or 20-residue Lariatin-B. These linear peptides are probably cross-linked by LarB. Finally, lariatins A and B may be exported by ABC transporter LarE.

In terms of biological role, peptide antibiotic with selective activity against Mycobacterium species (M.smegmatis, MIC=3.13 ug/ml and M.tuberculosis, MIC=0.39 ug/ml). it is plausible that the target of lariatins lies within the cell wall in mycobacteria. Its function is as follows. Peptide antibiotic with selective activity against Mycobacterium species (M.smegmatis, MIC=6.25 ug/ml). This is Lariatin from Rhodococcus jostii.